The sequence spans 182 residues: ATP-dependent protease subunit HslV (182 aa).

Threonine 10 is a catalytic residue. Residues alanine 166, cysteine 169, and serine 172 each contribute to the Na(+) site.

Belongs to the peptidase T1B family. HslV subfamily. A double ring-shaped homohexamer of HslV is capped on each side by a ring-shaped HslU homohexamer. The assembly of the HslU/HslV complex is dependent on binding of ATP.

The protein localises to the cytoplasm. The enzyme catalyses ATP-dependent cleavage of peptide bonds with broad specificity.. Allosterically activated by HslU binding. Its function is as follows. Protease subunit of a proteasome-like degradation complex believed to be a general protein degrading machinery. This is ATP-dependent protease subunit HslV from Rickettsia peacockii (strain Rustic).